The chain runs to 302 residues: Cell division protein FtsQ (302 aa).

Over 1-43 (MRPVDKKPVDRKIERETRYLRRDPAPSRWSYRYQRLMLTPAFR) the chain is Cytoplasmic. Residues 44–64 (AGVRLGTPVIIIALAVAVVFG) form a helical membrane-spanning segment. Topologically, residues 65-302 (RADSRDWIMG…SMPGRSAGRG (238 aa)) are periplasmic. The 68-residue stretch at 89 to 156 (FMVGSFAITG…GVLQIVIEER (68 aa)) folds into the POTRA domain.

The protein belongs to the FtsQ/DivIB family. FtsQ subfamily.

Its subcellular location is the cell inner membrane. In terms of biological role, essential cell division protein. This is Cell division protein FtsQ from Ketogulonicigenium vulgare (strain Y25).